The following is a 319-amino-acid chain: Acetyl-coenzyme A carboxylase carboxyl transferase subunit alpha (319 aa).

Residues Asn-32–Ala-293 form the CoA carboxyltransferase C-terminal domain.

This sequence belongs to the AccA family. In terms of assembly, acetyl-CoA carboxylase is a heterohexamer composed of biotin carboxyl carrier protein (AccB), biotin carboxylase (AccC) and two subunits each of ACCase subunit alpha (AccA) and ACCase subunit beta (AccD).

It is found in the cytoplasm. The catalysed reaction is N(6)-carboxybiotinyl-L-lysyl-[protein] + acetyl-CoA = N(6)-biotinyl-L-lysyl-[protein] + malonyl-CoA. Its pathway is lipid metabolism; malonyl-CoA biosynthesis; malonyl-CoA from acetyl-CoA: step 1/1. Component of the acetyl coenzyme A carboxylase (ACC) complex. First, biotin carboxylase catalyzes the carboxylation of biotin on its carrier protein (BCCP) and then the CO(2) group is transferred by the carboxyltransferase to acetyl-CoA to form malonyl-CoA. The protein is Acetyl-coenzyme A carboxylase carboxyl transferase subunit alpha of Xanthomonas axonopodis pv. citri (strain 306).